A 273-amino-acid polypeptide reads, in one-letter code: Putative pyruvate, phosphate dikinase regulatory protein (273 aa).

149–156 lines the ADP pocket; that stretch reads GPSRTSKT.

This sequence belongs to the pyruvate, phosphate/water dikinase regulatory protein family. PDRP subfamily.

It carries out the reaction N(tele)-phospho-L-histidyl/L-threonyl-[pyruvate, phosphate dikinase] + ADP = N(tele)-phospho-L-histidyl/O-phospho-L-threonyl-[pyruvate, phosphate dikinase] + AMP + H(+). The catalysed reaction is N(tele)-phospho-L-histidyl/O-phospho-L-threonyl-[pyruvate, phosphate dikinase] + phosphate + H(+) = N(tele)-phospho-L-histidyl/L-threonyl-[pyruvate, phosphate dikinase] + diphosphate. Its function is as follows. Bifunctional serine/threonine kinase and phosphorylase involved in the regulation of the pyruvate, phosphate dikinase (PPDK) by catalyzing its phosphorylation/dephosphorylation. The polypeptide is Putative pyruvate, phosphate dikinase regulatory protein (Rickettsia akari (strain Hartford)).